A 197-amino-acid chain; its full sequence is Cytochrome c biogenesis ATP-binding export protein CcmA (197 aa).

Residues 1–196 (MSMLSLHQLQ…VIKSAQILQL (196 aa)) enclose the ABC transporter domain. Residue 35–42 (GANGSGKS) coordinates ATP.

Belongs to the ABC transporter superfamily. CcmA exporter (TC 3.A.1.107) family. The complex is composed of two ATP-binding proteins (CcmA) and two transmembrane proteins (CcmB).

The protein resides in the cell inner membrane. The enzyme catalyses heme b(in) + ATP + H2O = heme b(out) + ADP + phosphate + H(+). Part of the ABC transporter complex CcmAB involved in the biogenesis of c-type cytochromes; once thought to export heme, this seems not to be the case, but its exact role is uncertain. Responsible for energy coupling to the transport system. The polypeptide is Cytochrome c biogenesis ATP-binding export protein CcmA (Rickettsia typhi (strain ATCC VR-144 / Wilmington)).